Consider the following 125-residue polypeptide: Large ribosomal subunit protein bL12 (125 aa).

The protein belongs to the bacterial ribosomal protein bL12 family. Homodimer. Part of the ribosomal stalk of the 50S ribosomal subunit. Forms a multimeric L10(L12)X complex, where L10 forms an elongated spine to which 2 to 4 L12 dimers bind in a sequential fashion. Binds GTP-bound translation factors.

Forms part of the ribosomal stalk which helps the ribosome interact with GTP-bound translation factors. Is thus essential for accurate translation. The protein is Large ribosomal subunit protein bL12 of Gluconobacter oxydans (strain 621H) (Gluconobacter suboxydans).